The sequence spans 688 residues: Elongation factor G (688 aa).

In terms of domain architecture, tr-type G spans 8 to 282 (EKTRNIGIMA…AIIDYLPSPM (275 aa)). GTP contacts are provided by residues 17–24 (AHIDAGKT), 81–85 (DTPGH), and 135–138 (NKMD).

The protein belongs to the TRAFAC class translation factor GTPase superfamily. Classic translation factor GTPase family. EF-G/EF-2 subfamily.

The protein resides in the cytoplasm. In terms of biological role, catalyzes the GTP-dependent ribosomal translocation step during translation elongation. During this step, the ribosome changes from the pre-translocational (PRE) to the post-translocational (POST) state as the newly formed A-site-bound peptidyl-tRNA and P-site-bound deacylated tRNA move to the P and E sites, respectively. Catalyzes the coordinated movement of the two tRNA molecules, the mRNA and conformational changes in the ribosome. The chain is Elongation factor G from Phytoplasma mali (strain AT).